Here is a 279-residue protein sequence, read N- to C-terminus: Small ribosomal subunit protein uS2 (279 aa).

Residues 255-279 (LLAGATTAAPEAAAGEAAAAPEQSS) are disordered.

Belongs to the universal ribosomal protein uS2 family.

This is Small ribosomal subunit protein uS2 from Mycolicibacterium gilvum (strain PYR-GCK) (Mycobacterium gilvum (strain PYR-GCK)).